A 161-amino-acid polypeptide reads, in one-letter code: Cyclic pyranopterin monophosphate synthase (161 aa).

Residues L78–H80 and M116–E117 each bind substrate. Residue D131 is part of the active site.

The protein belongs to the MoaC family. Homohexamer; trimer of dimers.

The enzyme catalyses (8S)-3',8-cyclo-7,8-dihydroguanosine 5'-triphosphate = cyclic pyranopterin phosphate + diphosphate. The protein operates within cofactor biosynthesis; molybdopterin biosynthesis. In terms of biological role, catalyzes the conversion of (8S)-3',8-cyclo-7,8-dihydroguanosine 5'-triphosphate to cyclic pyranopterin monophosphate (cPMP). This chain is Cyclic pyranopterin monophosphate synthase, found in Bordetella pertussis (strain Tohama I / ATCC BAA-589 / NCTC 13251).